A 473-amino-acid polypeptide reads, in one-letter code: Photosystem II CP43 reaction center protein (473 aa).

A propeptide spanning residues 1–14 is cleaved from the precursor; the sequence is MKTLYSLRRFYHVE. N-acetylthreonine is present on T15. Position 15 is a phosphothreonine (T15). 5 helical membrane passes run 69 to 93, 134 to 155, 178 to 200, 255 to 275, and 291 to 312; these read LFEV…PHLA, LLGP…KDRN, KALY…RKIT, KPFA…LSYS, and WFNN…ASQA. A [CaMn4O5] cluster-binding site is contributed by E367. The helical transmembrane segment at 447 to 471 threads the bilayer; it reads RARAAAAGFEKGIDRDFEPVLSMTP.

Belongs to the PsbB/PsbC family. PsbC subfamily. In terms of assembly, PSII is composed of 1 copy each of membrane proteins PsbA, PsbB, PsbC, PsbD, PsbE, PsbF, PsbH, PsbI, PsbJ, PsbK, PsbL, PsbM, PsbT, PsbX, PsbY, PsbZ, Psb30/Ycf12, at least 3 peripheral proteins of the oxygen-evolving complex and a large number of cofactors. It forms dimeric complexes. Binds multiple chlorophylls and provides some of the ligands for the Ca-4Mn-5O cluster of the oxygen-evolving complex. It may also provide a ligand for a Cl- that is required for oxygen evolution. PSII binds additional chlorophylls, carotenoids and specific lipids. serves as cofactor.

The protein resides in the plastid. It localises to the chloroplast thylakoid membrane. In terms of biological role, one of the components of the core complex of photosystem II (PSII). It binds chlorophyll and helps catalyze the primary light-induced photochemical processes of PSII. PSII is a light-driven water:plastoquinone oxidoreductase, using light energy to abstract electrons from H(2)O, generating O(2) and a proton gradient subsequently used for ATP formation. This is Photosystem II CP43 reaction center protein from Chloranthus spicatus (Chulantree).